The primary structure comprises 170 residues: MDILLVDGYNMIGAWPQLKDLKANSFEEARDVLIQKMAEYQSYTGNRVIVVFDAHLVKGLEKKQTNHRVEVIFTKENETADERIEKLAQALNNIATQIHVATSDYTEQWAIFGQGALRKSARELLREVETIERRIERRVRKITSEKPAGKIALSEEVLKTFEKWRRGDLD.

This is an uncharacterized protein from Bacillus subtilis (strain 168).